A 170-amino-acid polypeptide reads, in one-letter code: NADH-quinone oxidoreductase subunit B (170 aa).

The [4Fe-4S] cluster site is built by cysteine 37, cysteine 38, cysteine 102, and cysteine 131.

The protein belongs to the complex I 20 kDa subunit family. NDH-1 is composed of 14 different subunits. Subunits NuoB, C, D, E, F, and G constitute the peripheral sector of the complex. [4Fe-4S] cluster serves as cofactor.

The protein resides in the cell inner membrane. The enzyme catalyses a quinone + NADH + 5 H(+)(in) = a quinol + NAD(+) + 4 H(+)(out). NDH-1 shuttles electrons from NADH, via FMN and iron-sulfur (Fe-S) centers, to quinones in the respiratory chain. The immediate electron acceptor for the enzyme in this species is believed to be ubiquinone. Couples the redox reaction to proton translocation (for every two electrons transferred, four hydrogen ions are translocated across the cytoplasmic membrane), and thus conserves the redox energy in a proton gradient. The sequence is that of NADH-quinone oxidoreductase subunit B from Geobacter metallireducens (strain ATCC 53774 / DSM 7210 / GS-15).